Consider the following 204-residue polypeptide: ATP phosphoribosyltransferase (204 aa).

The protein belongs to the ATP phosphoribosyltransferase family. Short subfamily. In terms of assembly, heteromultimer composed of HisG and HisZ subunits.

The protein localises to the cytoplasm. The enzyme catalyses 1-(5-phospho-beta-D-ribosyl)-ATP + diphosphate = 5-phospho-alpha-D-ribose 1-diphosphate + ATP. It functions in the pathway amino-acid biosynthesis; L-histidine biosynthesis; L-histidine from 5-phospho-alpha-D-ribose 1-diphosphate: step 1/9. Its function is as follows. Catalyzes the condensation of ATP and 5-phosphoribose 1-diphosphate to form N'-(5'-phosphoribosyl)-ATP (PR-ATP). Has a crucial role in the pathway because the rate of histidine biosynthesis seems to be controlled primarily by regulation of HisG enzymatic activity. The protein is ATP phosphoribosyltransferase of Hydrogenobaculum sp. (strain Y04AAS1).